A 308-amino-acid polypeptide reads, in one-letter code: MIVSTLEHILTHISFSIVSILITIKLRIFLADEIKKLYDSSERGMLVTFFCITGLLATHWIYLGHFPLSDLSESLIFLSWSFALIHSIAYFTKNTKLLSTITSQSTVFTQGFATSGILTEIQKSSILVPALQSEWLIMHVSLMILGYAALLCGSLLSVALMVITFRKDGKFFSKSKDFLFTEIFYKKIFVFNYNNYYKTQLIQELDFWSYQVIGLGFIFLTIGILSGAVWANEAWGSYWSWDPKETWAFITWIVFAIYLHTRKKRSLQGTNSAIVASIGFLIIWICYFGVNLVGLGLHSYGSFPSTSN.

A run of 7 helical transmembrane segments spans residues 2–22, 44–64, 71–91, 143–163, 212–232, 239–259, and 273–293; these read IVST…SILI, GMLV…IYLG, LSES…IAYF, MILG…LMVI, VIGL…VWAN, WSWD…AIYL, and AIVA…VNLV.

The protein belongs to the CcmF/CycK/Ccl1/NrfE/CcsA family. As to quaternary structure, may interact with Ccs1.

The protein resides in the plastid membrane. Its function is as follows. Required during biogenesis of c-type cytochromes (cytochrome c6 and cytochrome f) at the step of heme attachment. This chain is Cytochrome c biogenesis protein CcsA, found in Cuscuta exaltata (Tall dodder).